Consider the following 357-residue polypeptide: Fructose-bisphosphate aldolase, cytoplasmic isozyme 1 (357 aa).

Positions 52 and 142 each coordinate substrate. Residue glutamate 183 is the Proton acceptor of the active site. The Schiff-base intermediate with dihydroxyacetone-P role is filled by lysine 225.

The protein belongs to the class I fructose-bisphosphate aldolase family.

It localises to the cytoplasm. It carries out the reaction beta-D-fructose 1,6-bisphosphate = D-glyceraldehyde 3-phosphate + dihydroxyacetone phosphate. Its pathway is carbohydrate degradation; glycolysis; D-glyceraldehyde 3-phosphate and glycerone phosphate from D-glucose: step 4/4. This is Fructose-bisphosphate aldolase, cytoplasmic isozyme 1 from Pisum sativum (Garden pea).